The chain runs to 267 residues: Tetrahydromethanopterin S-methyltransferase subunit C (267 aa).

7 helical membrane passes run 19–39 (IMAIGAIGGLAGIYLGNFMPA), 40–60 (QFSFFGGLGAICAMVWGADAV), 75–95 (IGMISLGMGIVAALFGLSVGG), 96–116 (IAGPIVSFIAAAIIGAVIGVL), 131–151 (AMVEIAGAGTLVIIGLSVVIA), 162–182 (YVVANGYIALIFIIGGMGILH), and 221–241 (GLMAAGLNIAVGVIIWAWAFM).

It belongs to the MtrC family. As to quaternary structure, the complex is composed of 8 subunits; MtrA, MtrB, MtrC, MtrD, MtrE, MtrF, MtrG and MtrH.

The protein resides in the cell membrane. It catalyses the reaction 5-methyl-5,6,7,8-tetrahydromethanopterin + coenzyme M + 2 Na(+)(in) = 5,6,7,8-tetrahydromethanopterin + methyl-coenzyme M + 2 Na(+)(out). Its pathway is one-carbon metabolism; methanogenesis from CO(2); methyl-coenzyme M from 5,10-methylene-5,6,7,8-tetrahydromethanopterin: step 2/2. In terms of biological role, part of a complex that catalyzes the formation of methyl-coenzyme M and tetrahydromethanopterin from coenzyme M and methyl-tetrahydromethanopterin. This is an energy-conserving, sodium-ion translocating step. This chain is Tetrahydromethanopterin S-methyltransferase subunit C, found in Methanosarcina acetivorans (strain ATCC 35395 / DSM 2834 / JCM 12185 / C2A).